The chain runs to 373 residues: Sterol 24-C-methyltransferase (373 aa).

It belongs to the class I-like SAM-binding methyltransferase superfamily. Erg6/SMT family.

The enzyme catalyses zymosterol + S-adenosyl-L-methionine = fecosterol + S-adenosyl-L-homocysteine + H(+). It functions in the pathway steroid metabolism; ergosterol biosynthesis; ergosterol from zymosterol: step 1/5. In terms of biological role, catalyzes the methyl transfer from S-adenosyl-methionine to the C-24 of zymosterol to form fecosterol. The protein is Sterol 24-C-methyltransferase (ERG6) of Eremothecium gossypii (strain ATCC 10895 / CBS 109.51 / FGSC 9923 / NRRL Y-1056) (Yeast).